Reading from the N-terminus, the 284-residue chain is Putative transcription factor kapC (284 aa).

The segment covering 1-10 (MQPTLAPAPH) has biased composition (pro residues). Residues 1–121 (MQPTLAPAPH…NRAAQRAFRQ (121 aa)) are disordered. Residues 26–40 (HDQLLAAHQHLSHPQ) are compositionally biased toward low complexity. Pro residues predominate over residues 41 to 54 (QPRPQPPAAQPPHM). A compositionally biased stretch (polar residues) spans 57–67 (NTTSPRDQNNI). Positions 102 to 165 (PLSTSKRAAQ…EYIINLQSRL (64 aa)) constitute a bZIP domain. Residues 103–126 (LSTSKRAAQNRAAQRAFRQRKESY) are basic motif. A compositionally biased stretch (low complexity) spans 108–118 (RAAQNRAAQRA). Residues 130-161 (LEEQVKEFDTMSEAFKALQAENYQLREYIINL) are leucine-zipper. The disordered stretch occupies residues 174–284 (ELPGNIDLSQ…QAPHGLPMVS (111 aa)). A compositionally biased stretch (low complexity) spans 193-222 (PGAGPATTSSSAPAPPSGAQQAQPPQGAAS).

The protein belongs to the bZIP family.

It localises to the nucleus. Functionally, putative transcription factor. In Aspergillus oryzae (strain ATCC 42149 / RIB 40) (Yellow koji mold), this protein is Putative transcription factor kapC (kapC).